The chain runs to 157 residues: uncharacterized protein (157 aa).

Residues 6–157 form the HTH marR-type domain; that stretch reads HDELFQAIQQ…AFFNLWIKYM (152 aa). The H-T-H motif DNA-binding region spans 66–89; the sequence is NSFLASRLHISKAAVSKAVHALLK.

It localises to the cytoplasm. This is an uncharacterized protein from Bacillus subtilis (strain 168).